Consider the following 1023-residue polypeptide: Vacuolar membrane protease (1023 aa).

Over 1-80 (MRAAGCGGTG…FFRSVFGYRK (80 aa)) the chain is Cytoplasmic. Over residues 17 to 48 (KLSRSISQHQPKSMPQASVNSEQNPSVPNSPS) the composition is skewed to polar residues. The segment at 17–59 (KLSRSISQHQPKSMPQASVNSEQNPSVPNSPSAHKPARSQSAQ) is disordered. The chain crosses the membrane as a helical span at residues 81-101 (TSLTFLVALVFAATLLLSWAD). Over 102–425 (SSLDFSVDMP…VVFSVSQVVS (324 aa)) the chain is Vacuolar. Residues asparagine 170 and asparagine 200 are each glycosylated (N-linked (GlcNAc...) asparagine). 2 residues coordinate Zn(2+): histidine 214 and aspartate 226. Catalysis depends on glutamate 259, which acts as the Proton acceptor. The Zn(2+) site is built by glutamate 260, glutamate 285, and histidine 357. Residues 426–446 (ANIALLVVVPVASLLLLFIIF) form a helical membrane-spanning segment. At 447 to 461 (RCNKGWGFNFVNAIK) the chain is on the cytoplasmic side. The helical transmembrane segment at 462-482 (YPLSLVASVLVLTFVSQVIIV) threads the bilayer. Over 483–491 (PSNPFLVNS) the chain is Vacuolar. The N-linked (GlcNAc...) asparagine glycan is linked to asparagine 490. The chain crosses the membrane as a helical span at residues 492-512 (SIGLLVATLFSLFLLLNYIVL). Over 513–529 (NGLNLVFKSFKGHQHDE) the chain is Cytoplasmic. Residues 530–550 (KLIVMCESSFLTWILLLWSTV) form a helical membrane-spanning segment. The Vacuolar portion of the chain corresponds to 551 to 564 (KLSHNKFGDDHTGE). The helical transmembrane segment at 565-585 (LFIPILFSLQAVACFLGFLGW) threads the bilayer. Over 586 to 643 (CFKPSKKVKVSREEHQPLLSSNGSNYGTQDDDDSLAPSSSLSLQSGFSENCEVHETKS) the chain is Cytoplasmic. The segment covering 604 to 613 (LSSNGSNYGT) has biased composition (polar residues). A disordered region spans residues 604-626 (LSSNGSNYGTQDDDDSLAPSSSL). A helical transmembrane segment spans residues 644–664 (FSYDWLVQFLVIVPISSLIIF). Residues 665 to 687 (NSGSLILNGLNKSIQESLSAQNL) lie on the Vacuolar side of the membrane. The N-linked (GlcNAc...) asparagine glycan is linked to asparagine 675. Residues 688-708 (IYKFIQIFVIVWSIPFLPFIF) form a helical membrane-spanning segment. The Cytoplasmic segment spans residues 709–712 (KLNR). Residues 713 to 733 (IIVLALSLVLLYGFFAVNITD) form a helical membrane-spanning segment. Topologically, residues 734–1023 (AFNDANPLKL…MVSVTKYIEV (290 aa)) are vacuolar. N-linked (GlcNAc...) asparagine glycans are attached at residues asparagine 815, asparagine 858, and asparagine 892.

Belongs to the peptidase M28 family. It depends on Zn(2+) as a cofactor.

It is found in the vacuole membrane. Its function is as follows. May be involved in vacuolar sorting and osmoregulation. The protein is Vacuolar membrane protease of Clavispora lusitaniae (strain ATCC 42720) (Yeast).